Here is a 138-residue protein sequence, read N- to C-terminus: Large ribosomal subunit protein uL16 (138 aa).

Positions 1–13 (MLQPARRKYRKEQ) are enriched in basic residues. The segment at 1 to 22 (MLQPARRKYRKEQKGRNTGVAT) is disordered.

It belongs to the universal ribosomal protein uL16 family. As to quaternary structure, part of the 50S ribosomal subunit.

Binds 23S rRNA and is also seen to make contacts with the A and possibly P site tRNAs. The protein is Large ribosomal subunit protein uL16 of Polaromonas sp. (strain JS666 / ATCC BAA-500).